The chain runs to 207 residues: Vexin (207 aa).

Residues 55 to 102 (LELLPHRGDRRDPGDGRRFGRLQTARPPTAHPAKASARPVGISEPKTS) are disordered. The segment covering 58-72 (LPHRGDRRDPGDGRR) has biased composition (basic and acidic residues).

The protein belongs to the vexin family.

It is found in the cell membrane. The protein resides in the nucleus. Functionally, required for neurogenesis in the neural plate and retina. Strongly cooperates with neural bHLH factors to promote neurogenesis. The chain is Vexin from Pongo abelii (Sumatran orangutan).